A 228-amino-acid chain; its full sequence is Nuclear phosphoprotein UL3 homolog (228 aa).

The protein belongs to the alphaherpesvirinae HHV-1 UL3 family. In terms of processing, phosphorylated.

It localises to the host nucleus. This is Nuclear phosphoprotein UL3 homolog (MDV015) from Gallus gallus (Chicken).